The primary structure comprises 179 residues: Large ribosomal subunit protein uL5 (179 aa).

The protein belongs to the universal ribosomal protein uL5 family. Part of the 50S ribosomal subunit; part of the 5S rRNA/L5/L18/L25 subcomplex. Contacts the 5S rRNA and the P site tRNA. Forms a bridge to the 30S subunit in the 70S ribosome.

In terms of biological role, this is one of the proteins that bind and probably mediate the attachment of the 5S RNA into the large ribosomal subunit, where it forms part of the central protuberance. In the 70S ribosome it contacts protein S13 of the 30S subunit (bridge B1b), connecting the 2 subunits; this bridge is implicated in subunit movement. Contacts the P site tRNA; the 5S rRNA and some of its associated proteins might help stabilize positioning of ribosome-bound tRNAs. The polypeptide is Large ribosomal subunit protein uL5 (Burkholderia vietnamiensis (strain G4 / LMG 22486) (Burkholderia cepacia (strain R1808))).